We begin with the raw amino-acid sequence, 151 residues long: Methylglyoxal synthase (151 aa).

Residues 6 to 151 (RVMPAHKHIA…DYDAYLAERV (146 aa)) form the MGS-like domain. Substrate-binding positions include His-19, Lys-23, 45–48 (TGTT), and 65–66 (SG). The active-site Proton donor/acceptor is the Asp-71. Residue His-98 participates in substrate binding.

Belongs to the methylglyoxal synthase family.

It catalyses the reaction dihydroxyacetone phosphate = methylglyoxal + phosphate. Catalyzes the formation of methylglyoxal from dihydroxyacetone phosphate. In Aliivibrio fischeri (strain MJ11) (Vibrio fischeri), this protein is Methylglyoxal synthase.